A 127-amino-acid chain; its full sequence is Spore germination protein 1 (127 aa).

The signal sequence occupies residues 1–25 (MNIKNSLILIISTIFVLSMINGGLT). N-linked (GlcNAc...) asparagine glycans are attached at residues N54 and N118.

Belongs to the Dictyostelium gerABC family.

The protein resides in the secreted. The sequence is that of Spore germination protein 1 (gerA) from Dictyostelium discoideum (Social amoeba).